The sequence spans 128 residues: Keratin-associated protein 2-3 (128 aa).

The interval 5-112 (CCGSTLSSLS…SVQSPCCRPP (108 aa)) is 10 X 5 AA repeats of C-C-[CDPQRWG]-[APRS]-[CIPSTVD].

The protein belongs to the KRTAP type 2 family. Interacts with hair keratins.

Its function is as follows. In the hair cortex, hair keratin intermediate filaments are embedded in an interfilamentous matrix, consisting of hair keratin-associated proteins (KRTAP), which are essential for the formation of a rigid and resistant hair shaft through their extensive disulfide bond cross-linking with abundant cysteine residues of hair keratins. The matrix proteins include the high-sulfur and high-glycine-tyrosine keratins. This chain is Keratin-associated protein 2-3 (KRTAP2-3), found in Homo sapiens (Human).